The sequence spans 1805 residues: Kinesin-like protein KIF13A (1805 aa).

Positions 5–352 (KVKVAVRVRP…LRYADRAKRI (348 aa)) constitute a Kinesin motor domain. 102 to 109 (GQTGSGKS) is a binding site for ATP. Residues 359–436 (NEDPNAKVIR…QLESMGISLE (78 aa)) adopt a coiled-coil conformation. One can recognise an FHA domain in the interval 469-519 (HTRVGADTSQDIQLFGIGIQPQHCEIDIASDGDVTLTPKENARSCVNGTLV). The segment covering 556–567 (EKETGPPEHDLD) has biased composition (basic and acidic residues). 2 disordered regions span residues 556–575 (EKET…ASSE) and 633–656 (QQLS…SQTA). Coiled-coil stretches lie at residues 602 to 775 (VQVL…LYGK) and 1100 to 1138 (DALI…EQWV). Phosphoserine is present on Ser-636. Ser-1287 carries the post-translational modification Phosphoserine. A compositionally biased stretch (polar residues) spans 1385-1396 (TPNVHNVSSSRP). Residues 1385–1404 (TPNVHNVSSSRPDLSGFDED) form a disordered region. Phosphoserine is present on residues Ser-1454, Ile-1481, Ser-1490, and Met-1494. The disordered stretch occupies residues 1507-1531 (PSGSNGSSMPVEHNSKREKKIDSEE). Residues 1518 to 1547 (EHNSKREKKIDSEEEENELEAINRKLISSQ) are a coiled coil. A compositionally biased stretch (basic and acidic residues) spans 1519 to 1528 (HNSKREKKID). Phosphoserine occurs at positions 1529 and 1572. Over residues 1612–1621 (MVVPSSDSSD) the composition is skewed to low complexity. The tract at residues 1612 to 1645 (MVVPSSDSSDQLAIQTKDADSTEHSTPSLVHDFR) is disordered. Phosphoserine occurs at positions 1648 and 1698. The disordered stretch occupies residues 1749–1779 (GLTDSSAGELSSRRSLPNKTGGKTVSDGLHH). Residues 1751–1771 (TDSSAGELSSRRSLPNKTGGK) are compositionally biased toward polar residues.

This sequence belongs to the TRAFAC class myosin-kinesin ATPase superfamily. Kinesin family. Interacts with AP2B1. Interacts with ZFYVE26. Interacts with AP1G1 and AP1G2. In terms of tissue distribution, widely expressed, with highest levels in heart, brain and skeletal muscle.

The protein localises to the cytoplasm. The protein resides in the cytoskeleton. It is found in the microtubule organizing center. It localises to the centrosome. Its subcellular location is the midbody. The protein localises to the endosome membrane. The protein resides in the golgi apparatus membrane. Its function is as follows. Plus end-directed microtubule-dependent motor protein involved in intracellular transport and regulating various processes such as mannose-6-phosphate receptor (M6PR) transport to the plasma membrane, endosomal sorting during melanosome biogenesis and cytokinesis. Mediates the transport of M6PR-containing vesicles from trans-Golgi network to the plasma membrane via direct interaction with the AP-1 complex. During melanosome maturation, required for delivering melanogenic enzymes from recycling endosomes to nascent melanosomes by creating peripheral recycling endosomal subdomains in melanocytes. Also required for the abscission step in cytokinesis: mediates translocation of ZFYVE26, and possibly TTC19, to the midbody during cytokinesis. The protein is Kinesin-like protein KIF13A (KIF13A) of Homo sapiens (Human).